Here is a 758-residue protein sequence, read N- to C-terminus: Meiotic driver SPOK4 (758 aa).

Residues 4–41 (KDRITQLLRKLEEAKAREEEAKAREAQERCEKERLQLE) adopt a coiled-coil conformation. Disordered regions lie at residues 180 to 230 (ELTQ…GVGI) and 414 to 499 (LSSA…MADP). Positions 181–190 (LTQEDDRSSG) are enriched in basic and acidic residues. Residues 416–429 (SAASSQNTENSEYT) are compositionally biased toward polar residues. The segment covering 457–468 (NEHDEHDEDHSE) has biased composition (basic and acidic residues).

The protein resides in the cytoplasm. It localises to the nucleus. In terms of biological role, promotes unequal transmission of alleles from the parental zygote to progeny spores by acting as poison/antidote system, leading to poisoning of progeny that do not inherit the allele. May possess DNA nuclease activity that leads to spore killing, and a kinase activity that confers resistance to the nuclease activity. Can suppress meiotic drive by the P.comata SPOK1 protein. This Podospora anserina (Pleurage anserina) protein is Meiotic driver SPOK4.